Here is a 664-residue protein sequence, read N- to C-terminus: MLLLTLIFLPFLGSVAAGLFGFYIGRKGSVFITTLTTFLSCIFSLIIIYNSITNEYEYIIYISNWINSGLFNCNWCFLFDSLTMIMLVVVTSISTLVHLYSSQYMAHDPHLSRFMSYLSLFTFFMIILVTGDNFMQMFVGWEGVGFCSYLLINFWFTRLQANKAAIKAMLVNRISDLILLLGVLTIFYNIRTIEYFSTFAAISIVKDFKFIFFNYILSIIDVACILIFIGAMGKSAQIFLHLWLPDAMEGPTPVSALIHAATMVTAGVYLTARCSPMFEYSMFSLKIITIIGASTAFFASTVGLVQNDFKKIVAYSTCSQLGYMFFACGLSNYPLAIFHLSNHAYFKALLFLCSGAVIHAMGDEQDIRKMGGLRRILPFTYIMFLIGSLSLMGFPFLTGFYSKDLILEVAFASFSETGHFAYWLGTIGAFFTAFYSTRLLFFAFLSETNAYKNIIKNAHDVPLEMGIPLGLLAFGSIFIGYISKDMFVGLGSDFWNNSIYINPFNNQMIDAEFLPTFFKLLPVILSFCGLFGAFYLYFFKFKFLYNLKISEYGLYFYNFLNRKWYFDKIYYEFINQYILKIGYNVTYKMIDKGLIEMCGPYGLTTIFSFLSQQIILLQTGYIYHYSLLMLISTIFLINIIFFSIIYYFNIITILLFLFIFLLIK.

17 helical membrane-spanning segments follow: residues 2 to 22 (LLLT…LFGF), 28 to 48 (GSVF…LIII), 77 to 97 (FLFD…STLV), 120 to 140 (LFTF…MFVG), 168 to 188 (AMLV…TIFY), 210 to 230 (FIFF…IFIG), 250 to 270 (GPTP…GVYL), 285 to 305 (LKII…VGLV), 321 to 341 (LGYM…FHLS), 342 to 362 (NHAY…HAMG), 376 to 396 (ILPF…GFPF), 424 to 444 (LGTI…FFAF), 462 to 482 (PLEM…IGYI), 521 to 541 (LPVI…FFKF), 590 to 610 (IDKG…FSFL), 614 to 634 (IILL…ISTI), and 639 to 659 (IIFF…FLFI).

The protein belongs to the complex I subunit 5 family.

The protein resides in the mitochondrion inner membrane. It carries out the reaction a ubiquinone + NADH + 5 H(+)(in) = a ubiquinol + NAD(+) + 4 H(+)(out). Functionally, core subunit of the mitochondrial membrane respiratory chain NADH dehydrogenase (Complex I) that is believed to belong to the minimal assembly required for catalysis. Complex I functions in the transfer of electrons from NADH to the respiratory chain. The immediate electron acceptor for the enzyme is believed to be ubiquinone. In Phytophthora infestans (Potato late blight agent), this protein is NADH-ubiquinone oxidoreductase chain 5 (ND5).